The chain runs to 352 residues: uncharacterized protein (352 aa).

Positions Met-1–Ala-22 are cleaved as a signal peptide. Residues Ser-25–Ser-47 are compositionally biased toward low complexity. Residues Ser-25 to Ala-49 form a disordered region. N-linked (GlcNAc...) asparagine glycans are attached at residues Asn-76, Asn-110, Asn-182, Asn-212, and Asn-223.

It localises to the secreted. This is an uncharacterized protein from Dictyostelium discoideum (Social amoeba).